Reading from the N-terminus, the 102-residue chain is Small ribosomal subunit protein uS10 (102 aa).

This sequence belongs to the universal ribosomal protein uS10 family. In terms of assembly, part of the 30S ribosomal subunit.

Functionally, involved in the binding of tRNA to the ribosomes. This Limosilactobacillus reuteri (strain DSM 20016) (Lactobacillus reuteri) protein is Small ribosomal subunit protein uS10.